A 583-amino-acid chain; its full sequence is Aspartate--tRNA ligase (583 aa).

E169 contributes to the L-aspartate binding site. An aspartate region spans residues 193–196 (QLFK). R215 contacts L-aspartate. Residues 215-217 (RDE) and Q224 contribute to the ATP site. L-aspartate is bound at residue H443. ATP is bound at residue E477. R484 serves as a coordination point for L-aspartate. ATP is bound at residue 529 to 532 (GIDR).

Belongs to the class-II aminoacyl-tRNA synthetase family. Type 1 subfamily. In terms of assembly, homodimer.

The protein resides in the cytoplasm. The enzyme catalyses tRNA(Asp) + L-aspartate + ATP = L-aspartyl-tRNA(Asp) + AMP + diphosphate. Its function is as follows. Catalyzes the attachment of L-aspartate to tRNA(Asp) in a two-step reaction: L-aspartate is first activated by ATP to form Asp-AMP and then transferred to the acceptor end of tRNA(Asp). The protein is Aspartate--tRNA ligase of Stenotrophomonas maltophilia (strain R551-3).